Reading from the N-terminus, the 289-residue chain is F-box protein PP2-A11 (289 aa).

In terms of domain architecture, F-box spans 23–69 (QPGLGDLPESCVALILQNLDPVEICRFSKLNTAFHGASWADFVWESK).

As to quaternary structure, part of a SCF (ASK-cullin-F-box) protein ligase complex. Interacts with SKP1A/ASK1.

It localises to the nucleus. The protein operates within protein modification; protein ubiquitination. Its function is as follows. Component of SCF(ASK-cullin-F-box) E3 ubiquitin ligase complexes, which may mediate the ubiquitination and subsequent proteasomal degradation of target proteins. In Arabidopsis thaliana (Mouse-ear cress), this protein is F-box protein PP2-A11 (PP2A11).